The sequence spans 513 residues: Histidine ammonia-lyase (513 aa).

The segment at residues 144–146 (ASG) is a cross-link (5-imidazolinone (Ala-Gly)). The residue at position 145 (Ser145) is a 2,3-didehydroalanine (Ser).

The protein belongs to the PAL/histidase family. Contains an active site 4-methylidene-imidazol-5-one (MIO), which is formed autocatalytically by cyclization and dehydration of residues Ala-Ser-Gly.

Its subcellular location is the cytoplasm. The catalysed reaction is L-histidine = trans-urocanate + NH4(+). Its pathway is amino-acid degradation; L-histidine degradation into L-glutamate; N-formimidoyl-L-glutamate from L-histidine: step 1/3. This chain is Histidine ammonia-lyase, found in Streptococcus pyogenes serotype M5 (strain Manfredo).